The sequence spans 309 residues: Testis-expressed protein 264 homolog (309 aa).

Over 1–3 the chain is Lumenal; sequence MPD. A helical; Signal-anchor for type III membrane protein membrane pass occupies residues 4–24; that stretch reads LLLLGLIGALTLLLLLTLLAF. Topologically, residues 25–309 are cytoplasmic; that stretch reads AGYSGLLTGV…ELSTPERGEE (285 aa). The disordered stretch occupies residues 193–309; it reads PEVKETERKC…ELSTPERGEE (117 aa). Residues 208–225 show a composition bias toward low complexity; the sequence is ATDTQTDGTGADTSDASS. Phosphoserine occurs at positions 238 and 243. Over residues 250–262 the composition is skewed to basic and acidic residues; it reads GWDDGDNRSEHSY. Positions 263–272 are enriched in low complexity; it reads SESGASGSSF. The LIR motif signature appears at 272 to 275; sequence FEEL.

As to quaternary structure, interacts (via the LIR motif) with ATG8 family proteins MAP1LC3A, MAP1LC3B, GABARAP and GABARAPL1. Interacts with VCP/p97; bridging VCP/p97 to covalent DNA-protein cross-links (DPCs). Interacts with TOP1 (when sumoylated).

Its subcellular location is the endoplasmic reticulum membrane. The protein resides in the cytoplasmic vesicle. It is found in the autophagosome. The protein localises to the cytoplasm. It localises to the cytosol. Its subcellular location is the nucleus. The protein resides in the chromosome. In terms of biological role, major reticulophagy (also called ER-phagy) receptor that acts independently of other candidate reticulophagy receptors to remodel subdomains of the endoplasmic reticulum into autophagosomes upon nutrient stress, which then fuse with lysosomes for endoplasmic reticulum turnover. The ATG8-containing isolation membrane (IM) cradles a tubular segment of TEX264-positive ER near a three-way junction, allowing the formation of a synapse of 2 juxtaposed membranes with trans interaction between the TEX264 and ATG8 proteins. Expansion of the IM would extend the capture of ER, possibly through a 'zipper-like' process involving continued trans TEX264-ATG8 interactions, until poorly understood mechanisms lead to the fission of relevant membranes and, ultimately, autophagosomal membrane closure. Also involved in the repair of covalent DNA-protein cross-links (DPCs) during DNA synthesis: acts by bridging VCP/p97 to covalent DNA-protein cross-links (DPCs) and initiating resolution of DPCs by SPRTN. The sequence is that of Testis-expressed protein 264 homolog from Mus musculus (Mouse).